The chain runs to 287 residues: Toxin zeta (287 aa).

An ATP-binding site is contributed by 40-47; it reads GQPGSGKT. The disordered stretch occupies residues 250-287; the sequence is MVQNQHQETPEFKAIQQKMESLQPPTPPIPKTPKLPGI. Positions 273-287 are enriched in pro residues; it reads PPTPPIPKTPKLPGI.

Belongs to the zeta toxin family. As to quaternary structure, in the presence of the epsilon antitoxin, forms an inactive PezA(2)PezT(2) heterotetramer.

It carries out the reaction UDP-N-acetyl-alpha-D-glucosamine + ATP = UDP-N-acetyl-alpha-D-glucosamine 3'-phosphate + ADP + H(+). Its function is as follows. Toxic component of a type II toxin-antitoxin (TA) system. Phosphorylates UDP-N-acetyl-D-glucosamine (UNAG) on the 3'-hydroxyl group of the N-acetyl-D-glucosamine moiety, yielding UNAG-3P. UNAG-3P inhibits MurA, the first committed step in cell wall synthesis, which is then blocked. Phosphorylation is inhibited by cognate epsilon antitoxin. Part of a postsegregational killing (PSK) system involved in the killing of plasmid-free cells. The zeta toxin induces programmed cell death. This is Toxin zeta from Streptococcus agalactiae.